The chain runs to 72 residues: Translation initiation factor IF-1 (72 aa).

Positions Met-1–Arg-72 constitute an S1-like domain.

The protein belongs to the IF-1 family. In terms of assembly, component of the 30S ribosomal translation pre-initiation complex which assembles on the 30S ribosome in the order IF-2 and IF-3, IF-1 and N-formylmethionyl-tRNA(fMet); mRNA recruitment can occur at any time during PIC assembly.

The protein localises to the cytoplasm. Its function is as follows. One of the essential components for the initiation of protein synthesis. Stabilizes the binding of IF-2 and IF-3 on the 30S subunit to which N-formylmethionyl-tRNA(fMet) subsequently binds. Helps modulate mRNA selection, yielding the 30S pre-initiation complex (PIC). Upon addition of the 50S ribosomal subunit IF-1, IF-2 and IF-3 are released leaving the mature 70S translation initiation complex. This Pseudomonas syringae pv. tomato (strain ATCC BAA-871 / DC3000) protein is Translation initiation factor IF-1.